Here is a 45-residue protein sequence, read N- to C-terminus: Pyruvate dehydrogenase E1 component (45 aa).

As to quaternary structure, homodimer. It depends on thiamine diphosphate as a cofactor.

It catalyses the reaction N(6)-[(R)-lipoyl]-L-lysyl-[protein] + pyruvate + H(+) = N(6)-[(R)-S(8)-acetyldihydrolipoyl]-L-lysyl-[protein] + CO2. Functionally, the pyruvate dehydrogenase complex catalyzes the overall conversion of pyruvate to acetyl-CoA and CO(2). It contains multiple copies of three enzymatic components: pyruvate dehydrogenase (E1), dihydrolipoamide acetyltransferase (E2) and lipoamide dehydrogenase (E3). This is Pyruvate dehydrogenase E1 component from Azotobacter vinelandii.